Here is a 338-residue protein sequence, read N- to C-terminus: Aspartate carbamoyltransferase catalytic subunit (338 aa).

Arginine 59 and threonine 60 together coordinate carbamoyl phosphate. Lysine 87 contacts L-aspartate. The carbamoyl phosphate site is built by arginine 109, histidine 142, and glutamine 145. L-aspartate-binding residues include arginine 182 and arginine 253. Positions 294 and 295 each coordinate carbamoyl phosphate.

The protein belongs to the aspartate/ornithine carbamoyltransferase superfamily. ATCase family. Heterododecamer (2C3:3R2) of six catalytic PyrB chains organized as two trimers (C3), and six regulatory PyrI chains organized as three dimers (R2).

It carries out the reaction carbamoyl phosphate + L-aspartate = N-carbamoyl-L-aspartate + phosphate + H(+). It participates in pyrimidine metabolism; UMP biosynthesis via de novo pathway; (S)-dihydroorotate from bicarbonate: step 2/3. In terms of biological role, catalyzes the condensation of carbamoyl phosphate and aspartate to form carbamoyl aspartate and inorganic phosphate, the committed step in the de novo pyrimidine nucleotide biosynthesis pathway. The sequence is that of Aspartate carbamoyltransferase catalytic subunit from Prochlorococcus marinus (strain SARG / CCMP1375 / SS120).